A 270-amino-acid chain; its full sequence is Diaminopimelate epimerase (270 aa).

Residues Asn15, Gln49, and Asn66 each coordinate substrate. The Proton donor role is filled by Cys75. Substrate contacts are provided by residues 76 to 77 (GN), Asn155, Asn187, and 204 to 205 (ER). Cys213 functions as the Proton acceptor in the catalytic mechanism. 214–215 (GS) contacts substrate.

The protein belongs to the diaminopimelate epimerase family. Homodimer.

The protein localises to the cytoplasm. It catalyses the reaction (2S,6S)-2,6-diaminopimelate = meso-2,6-diaminopimelate. The protein operates within amino-acid biosynthesis; L-lysine biosynthesis via DAP pathway; DL-2,6-diaminopimelate from LL-2,6-diaminopimelate: step 1/1. In terms of biological role, catalyzes the stereoinversion of LL-2,6-diaminopimelate (L,L-DAP) to meso-diaminopimelate (meso-DAP), a precursor of L-lysine and an essential component of the bacterial peptidoglycan. The protein is Diaminopimelate epimerase of Rickettsia rickettsii (strain Iowa).